We begin with the raw amino-acid sequence, 329 residues long: Eukaryotic translation initiation factor 3 subunit I (329 aa).

WD repeat units follow at residues 8 to 47, 50 to 89, 145 to 184, 187 to 226, and 284 to 323; these read GHQR…RLGT, GHGG…NIAT, ITDS…KIHS, EHTH…LLKE, and GHFG…FDYT.

This sequence belongs to the eIF-3 subunit I family. Component of the eukaryotic translation initiation factor 3 (eIF-3) complex.

The protein resides in the cytoplasm. Its function is as follows. Component of the eukaryotic translation initiation factor 3 (eIF-3) complex, which is involved in protein synthesis of a specialized repertoire of mRNAs and, together with other initiation factors, stimulates binding of mRNA and methionyl-tRNAi to the 40S ribosome. The eIF-3 complex specifically targets and initiates translation of a subset of mRNAs involved in cell proliferation. This is Eukaryotic translation initiation factor 3 subunit I from Bombyx mori (Silk moth).